The sequence spans 466 residues: Reticulophagy regulator 3 (466 aa).

Residues 1–80 (MEEAEGVAAA…WCLGLNAAFW (80 aa)) are Cytoplasmic-facing. Residue serine 26 is modified to Phosphoserine. A helical membrane pass occupies residues 81 to 101 (FFALTSLRFVFLLAFSLMIIV). Topologically, residues 102–168 (CIDQWKNKIW…LLFKKQNPGK (67 aa)) are lumenal. Residues 169–187 (FCLLSCGVLTFLAMLGRYI) traverse the membrane as a helical segment. The Cytoplasmic segment spans residues 188 to 192 (PGLLL). Residues 193–211 (SYLMLVIIMMWPLAVYHRL) traverse the membrane as a helical segment. Residues 212–381 (WDRAYVRLKP…ASRNEAALPE (170 aa)) are Lumenal-facing. The interval 244 to 263 (RRRALHSERATDSHSDSEEE) is disordered. Basic and acidic residues predominate over residues 248–259 (LHSERATDSHSD). Threonine 254 carries the post-translational modification Phosphothreonine. Serine 258 and serine 260 each carry phosphoserine. At threonine 283 the chain carries Phosphothreonine. Phosphoserine is present on residues serine 285, serine 288, serine 293, and serine 303. The tract at residues 285–335 (SEHSDAEVSCTENGTFNLSRGQTPLTEGSEDLDGHSDPEESFARDLPDFPS) is disordered. Positions 294-310 (CTENGTFNLSRGQTPLT) are enriched in polar residues. Threonine 307 and threonine 310 each carry phosphothreonine. 3 positions are modified to phosphoserine: serine 313, serine 320, and serine 360. Residues 316–331 (LDGHSDPEESFARDLP) are compositionally biased toward basic and acidic residues. Residues 382 to 401 (LLLSSLPGGSNLTSNLASLV) traverse the membrane as a helical segment. The Cytoplasmic segment spans residues 402–466 (SQGMIQLALS…QLDPASSRSH (65 aa)). Residues 412–444 (EASQTDPSGPPPRRATRGFLRAPSSDLDTDAEG) form a disordered region. Residue threonine 440 is modified to Phosphothreonine. The LIR motif motif lies at 445–450 (DDFELL).

The protein belongs to the RETREG family. As to quaternary structure, interacts with ATG8 family modifier proteins MAP1LC3A, MAP1LC3B, GABARAPL1 and GABARAPL2. Also interacts with ATG8 family modifier protein GABARAP. Interacts with CANX. Interacts with RTN4 isoform B. Widely expressed with highest levels in brain, lung, liver, muscle and spleen (protein level). Mainly expressed in the central nervous system and in parenchymatous organs including liver, lung and kidney.

The protein localises to the endoplasmic reticulum membrane. Endoplasmic reticulum (ER)-anchored autophagy regulator which exists in an inactive state under basal conditions but is activated following cellular stress. When activated, induces ER fragmentation and mediates ER delivery into lysosomes through sequestration into autophagosomes via interaction with ATG8 family proteins. Promotes ER membrane curvature and ER tubulation required for subsequent ER fragmentation and engulfment into autophagosomes. Required for collagen quality control in a LIR motif-dependent manner. Mediates NRF1-enhanced neurite outgrowth. This is Reticulophagy regulator 3 (Retreg3) from Mus musculus (Mouse).